A 398-amino-acid polypeptide reads, in one-letter code: Phosphoglycerate kinase (398 aa).

Residues 21–23, Arg41, 64–67, Arg123, and Arg156 each bind substrate; these read DFN and HLGR. ATP is bound by residues Lys207, Gly294, Glu325, and 354–357; that span reads GGDS.

Belongs to the phosphoglycerate kinase family. As to quaternary structure, monomer.

It localises to the cytoplasm. It carries out the reaction (2R)-3-phosphoglycerate + ATP = (2R)-3-phospho-glyceroyl phosphate + ADP. It participates in carbohydrate degradation; glycolysis; pyruvate from D-glyceraldehyde 3-phosphate: step 2/5. In Salinibacter ruber (strain DSM 13855 / M31), this protein is Phosphoglycerate kinase.